Reading from the N-terminus, the 407-residue chain is Imidazolonepropionase (407 aa).

The Fe(3+) site is built by His74 and His76. Positions 74 and 76 each coordinate Zn(2+). 3 residues coordinate 4-imidazolone-5-propanoate: Arg83, Tyr146, and His179. Tyr146 is an N-formimidoyl-L-glutamate binding site. His244 is a Fe(3+) binding site. His244 lines the Zn(2+) pocket. Gln247 is a binding site for 4-imidazolone-5-propanoate. Fe(3+) is bound at residue Asp319. Asp319 contributes to the Zn(2+) binding site. N-formimidoyl-L-glutamate is bound by residues Asn321 and Gly323. Thr324 lines the 4-imidazolone-5-propanoate pocket.

The protein belongs to the metallo-dependent hydrolases superfamily. HutI family. Zn(2+) serves as cofactor. The cofactor is Fe(3+).

It localises to the cytoplasm. It carries out the reaction 4-imidazolone-5-propanoate + H2O = N-formimidoyl-L-glutamate. It functions in the pathway amino-acid degradation; L-histidine degradation into L-glutamate; N-formimidoyl-L-glutamate from L-histidine: step 3/3. Catalyzes the hydrolytic cleavage of the carbon-nitrogen bond in imidazolone-5-propanoate to yield N-formimidoyl-L-glutamate. It is the third step in the universal histidine degradation pathway. The protein is Imidazolonepropionase of Salmonella schwarzengrund (strain CVM19633).